The following is a 298-amino-acid chain: ADP-ribosyl cyclase/cyclic ADP-ribose hydrolase 1 (298 aa).

At 1–21 (MPDYEFSPASGDRPRSWISKQ) the chain is on the cytoplasmic side. Residues 22 to 42 (VLIVLGVCLPVILALAIWVGV) traverse the membrane as a helical; Signal-anchor for type II membrane protein segment. The Extracellular portion of the chain corresponds to 43-298 (LTWRQSSMGA…PEHPSCSVLM (256 aa)). Cystine bridges form between Cys64-Cys80, Cys97-Cys178, and Cys158-Cys171. Residue Asn98 is glycosylated (N-linked (GlcNAc...) asparagine). The active site involves Cys117. N-linked (GlcNAc...) asparagine glycosylation is present at Asn118. An N-linked (GlcNAc...) asparagine glycan is attached at Asn177. Residue Cys199 is part of the active site. Asn207 and Asn268 each carry an N-linked (GlcNAc...) asparagine glycan. Disulfide bonds link Cys252/Cys273 and Cys285/Cys294.

This sequence belongs to the ADP-ribosyl cyclase family. Homodimer. Osteoclasts.

It localises to the cell membrane. Its subcellular location is the microsome membrane. The protein resides in the endoplasmic reticulum membrane. It carries out the reaction NAD(+) = cyclic ADP-beta-D-ribose + nicotinamide + H(+). It catalyses the reaction 2'-phospho-cyclic ADP-ribose + nicotinate = nicotinate-adenine dinucleotide phosphate. The catalysed reaction is NAD(+) + H2O = ADP-D-ribose + nicotinamide + H(+). The enzyme catalyses nicotinate + NADP(+) = nicotinate-adenine dinucleotide phosphate + nicotinamide. In terms of biological role, synthesizes cyclic ADP-ribose (cADPR), a second messenger for glucose-induced insulin secretion. Synthesizes the Ca(2+) mobilizer nicotinate-adenine dinucleotide phosphate, NAADP(+), from 2'-phospho-cADPR and nicotinic acid, as well as from NADP(+) and nicotinic acid. Also has cADPR hydrolase activity. This chain is ADP-ribosyl cyclase/cyclic ADP-ribose hydrolase 1 (CD38), found in Oryctolagus cuniculus (Rabbit).